The primary structure comprises 534 residues: Cyclin-L1 (534 aa).

Cyclin-like regions lie at residues 94 to 196 (ELIQ…RVLK) and 209 to 293 (KIIV…KILQ). Residues 327–534 (LPEGAPVLDN…DHPGHSRHRR (208 aa)) are disordered. A compositionally biased stretch (basic and acidic residues) spans 389 to 399 (KGRESRSRSGS). 2 stretches are compositionally biased toward low complexity: residues 400-412 (RDQS…SRSA) and 437-453 (RSGS…TYKS). The segment at 400–436 (RDQSYSRSPSRSASPKHRKSESYSTSSGSKSHSRSRS) is RS. Residues 468–485 (SAHKARKSRSRSSSRSRS) show a composition bias toward basic residues. The segment covering 486-495 (RSRERSDHSG) has biased composition (basic and acidic residues). The segment covering 496–511 (KYKKKSHYYRNHRHER) has biased composition (basic residues). Residues 512–528 (SRSYERASHRYDRDHPG) are compositionally biased toward basic and acidic residues.

This sequence belongs to the cyclin family. Cyclin L subfamily.

It localises to the nucleus speckle. Its subcellular location is the nucleus. It is found in the nucleoplasm. In terms of biological role, involved in pre-mRNA splicing. This Gallus gallus (Chicken) protein is Cyclin-L1 (CCNL1).